The chain runs to 231 residues: MFYPYNYSNLNVSTMPALPGISAFDGMQDEENVEISPERKYQTLLPVLTNSHVVENELKHKLNKTAFDFRYQTKSENGSEKWEPKYLITPNLQTRSVSFDNSSVQYNSDSSEKSSLSQLTCNSSIIQQPENGIVSNDAYNKMANSRYSLKTRKQRTDPRNTLSDEEDLEQRRKYICKICARGFTTSGHLARHNRIHTGEKNHCCPYKGCTQRFSRHDNCLQHYRTHLKKGQ.

Position 163 is a phosphoserine (Ser-163). 2 C2H2-type zinc fingers span residues 174 to 196 and 202 to 226; these read YICK…NRIH and HCCP…YRTH.

The protein resides in the nucleus. In terms of biological role, transcriptional repressor involved in regulation of glucose repression. Binds to UAS-1 in the STA1 promoter. This Saccharomyces cerevisiae (strain ATCC 204508 / S288c) (Baker's yeast) protein is Transcriptional regulator NRG1 (NRG1).